Consider the following 416-residue polypeptide: POC1 centriolar protein homolog A (416 aa).

WD repeat units follow at residues 16-55, 58-97, 100-139, 142-181, 184-223, 226-265, and 268-307; these read GHRD…RAYR, GHKD…ESVL, AHTG…IICT, EHNN…LIHT, EPGG…LLQH, VHSA…LLYT, and GHQG…VDYS. Residues 311–340 form a disordered region; sequence QQKRDHRTPSAQASGAAGDPESRSGQKTEV. A coiled-coil region spans residues 380–412; the sequence is QLDVLTQTVAILEQRLTLTEDKLKECLEQQHQA.

The protein belongs to the WD repeat POC1 family.

May play an important role in centriole assembly and/or stability and ciliogenesis. The polypeptide is POC1 centriolar protein homolog A (Danio rerio (Zebrafish)).